Consider the following 540-residue polypeptide: Alanine aminotransferase 2 (540 aa).

N6-(pyridoxal phosphate)lysine is present on K358.

The protein belongs to the class-I pyridoxal-phosphate-dependent aminotransferase family. Alanine aminotransferase subfamily. Homodimer. It depends on pyridoxal 5'-phosphate as a cofactor.

The enzyme catalyses L-alanine + 2-oxoglutarate = pyruvate + L-glutamate. Its pathway is amino-acid degradation; L-alanine degradation via transaminase pathway; pyruvate from L-alanine: step 1/1. Catalyzes the reversible transamination between alanine and 2-oxoglutarate to form pyruvate and glutamate. The polypeptide is Alanine aminotransferase 2 (gpt2) (Xenopus laevis (African clawed frog)).